A 24-amino-acid polypeptide reads, in one-letter code: Formate ester dehydrogenase gamma chain (24 aa).

In terms of assembly, heterotrimer composed of an alpha, a beta and a gamma chain.

The polypeptide is Formate ester dehydrogenase gamma chain (Amycolatopsis methanolica).